Consider the following 339-residue polypeptide: MSTVHEILCKLSLEGDHSTPPSAYGSVKAYTNFDAERDALNIETAIKTKGVDEVTIVNILTNRSNAQRQDIAFAYQRRTKKELASALKSALSGHLETVILGLLKTPAQYDASELKASMKGLGTDEDSLIEIICSRTNQELQEINRVYKEMYKTDLEKDIISDTSGDFRKLMVALAKGRRAEDGSVIDYELIDQDARDLYDAGVKRKGTDVPKWISIMTERSVPHLQKVFDRYKSYSPYDMLESIRKEVKGDLENAFLNLVQCIQNKPLYFADRLYDSMKGKGTRDKVLIRIMVSRSEVDMLKIRSEFKRKYGKSLYYYIQQDTKGDYQKALLYLCGGDD.

Ser2 is subject to N-acetylserine. Residues 2–24 (STVHEILCKLSLEGDHSTPPSAY) form an S100A10-binding site region. Tyr24 bears the Phosphotyrosine; by SRC mark. At Ser26 the chain carries Phosphoserine; by PKC. Annexin repeat units follow at residues 33-104 (FDAE…GLLK) and 105-176 (TPAQ…ALAK). An N6-acetyllysine; alternate modification is found at Lys49. Lys49 is covalently cross-linked (Glycyl lysine isopeptide (Lys-Gly) (interchain with G-Cter in SUMO1); alternate). Lys49 is covalently cross-linked (Glycyl lysine isopeptide (Lys-Gly) (interchain with G-Cter in SUMO2); alternate). An N6-acetyllysine modification is found at Lys152. Ser184 bears the Phosphoserine mark. Annexin repeat units lie at residues 189 to 261 (ELID…NLVQ) and 265 to 336 (NKPL…YLCG). Tyr199 bears the Phosphotyrosine mark. The residue at position 227 (Lys227) is an N6-acetyllysine.

Belongs to the annexin family. In terms of assembly, heterotetramer containing 2 light chains of S100A10/p11 and 2 heavy chains of ANXA2/p36. Interacts with ATP1B1. Interacts with DYSF. Interacts with COCH. Interacts (via repeat Annexin 1) with PCSK9 (via the C-terminal domain); the interaction inhibits the degradation of LDLR. Interacts with CEACAM1 (via the cytoplasmic domain); this interaction is regulated by phosphorylation of CEACAM1. Interacts with APPL2 and APPL1; targets APPL2 to endosomes and acting in parallel to RAB5A. Interacts with S100A4. May interact with UBAP2. Interacts with PLEKHG4B; this interaction is required for PLEKHG4B localization to cell-cell adhesions. (Microbial infection) Interacts with human cytomegalovirus (HCMV). As to quaternary structure, (Microbial infection) Interacts with M.pneumoniae CARDS toxin; CARDS probably uses this protein as a receptor. A portion of internalized CARDS remains associated with intracellular annexin 2. Phosphorylation of Tyr-24 enhances heat stress-induced translocation to the cell surface. In terms of processing, ISGylated.

It is found in the secreted. Its subcellular location is the extracellular space. The protein resides in the extracellular matrix. The protein localises to the basement membrane. It localises to the melanosome. Calcium-regulated membrane-binding protein whose affinity for calcium is greatly enhanced by anionic phospholipids. It binds two calcium ions with high affinity. May be involved in heat-stress response. Inhibits PCSK9-enhanced LDLR degradation, probably reduces PCSK9 protein levels via a translational mechanism but also competes with LDLR for binding with PCSK9. Binds to endosomes damaged by phagocytosis of particulate wear debris and participates in endosomal membrane stabilization, thereby limiting NLRP3 inflammasome activation. Required for endothelial cell surface plasmin generation and may support fibrinolytic surveillance and neoangiogenesis. In terms of biological role, (Microbial infection) Binds M.pneumoniae CARDS toxin, probably serves as one receptor for this pathogen. When ANXA2 is down-regulated by siRNA, less toxin binds to human cells and less vacuolization (a symptom of M.pneumoniae infection) is seen. In Homo sapiens (Human), this protein is Annexin A2 (ANXA2).